We begin with the raw amino-acid sequence, 350 residues long: DNA primase small subunit PriS (350 aa).

Catalysis depends on residues Asp-97, Asp-99, and Asp-251.

This sequence belongs to the eukaryotic-type primase small subunit family. Heterodimer of a small subunit (PriS) and a large subunit (PriL). Mg(2+) is required as a cofactor. The cofactor is Mn(2+). It depends on Zn(2+) as a cofactor.

Functionally, catalytic subunit of DNA primase, an RNA polymerase that catalyzes the synthesis of short RNA molecules used as primers for DNA polymerase during DNA replication. The small subunit contains the primase catalytic core and has DNA synthesis activity on its own. Binding to the large subunit stabilizes and modulates the activity, increasing the rate of DNA synthesis while decreasing the length of the DNA fragments, and conferring RNA synthesis capability. The DNA polymerase activity may enable DNA primase to also catalyze primer extension after primer synthesis. May also play a role in DNA repair. This is DNA primase small subunit PriS from Methanocaldococcus jannaschii (strain ATCC 43067 / DSM 2661 / JAL-1 / JCM 10045 / NBRC 100440) (Methanococcus jannaschii).